Consider the following 361-residue polypeptide: D-alanine--D-alanine ligase (361 aa).

Positions 134–344 (KILAQRAGVP…YTDLITKLID (211 aa)) constitute an ATP-grasp domain. ATP is bound at residue 169-224 (ASQLGSDLFVKPSNQGSSVGVSHVTNEKEYKVALAEAFKYDDKVLVEETVHGTEVE). Residues Asp-297, Glu-311, and Asn-313 each coordinate Mg(2+).

This sequence belongs to the D-alanine--D-alanine ligase family. Mg(2+) is required as a cofactor. Mn(2+) serves as cofactor.

Its subcellular location is the cytoplasm. The catalysed reaction is 2 D-alanine + ATP = D-alanyl-D-alanine + ADP + phosphate + H(+). It functions in the pathway cell wall biogenesis; peptidoglycan biosynthesis. Its function is as follows. Cell wall formation. The polypeptide is D-alanine--D-alanine ligase (Lactobacillus johnsonii (strain CNCM I-12250 / La1 / NCC 533)).